Reading from the N-terminus, the 163-residue chain is UPF0763 protein C8J_0930 (163 aa).

Belongs to the UPF0763 family.

This chain is UPF0763 protein C8J_0930, found in Campylobacter jejuni subsp. jejuni serotype O:6 (strain 81116 / NCTC 11828).